The chain runs to 124 residues: NADPH-dependent 7-cyano-7-deazaguanine reductase (124 aa).

The active-site Thioimide intermediate is Cys-40. Asp-47 functions as the Proton donor in the catalytic mechanism. Residues 62–64 (VEL) and 81–82 (HE) each bind substrate.

It belongs to the GTP cyclohydrolase I family. QueF type 1 subfamily.

The protein localises to the cytoplasm. It carries out the reaction 7-aminomethyl-7-carbaguanine + 2 NADP(+) = 7-cyano-7-deazaguanine + 2 NADPH + 3 H(+). It participates in tRNA modification; tRNA-queuosine biosynthesis. Functionally, catalyzes the NADPH-dependent reduction of 7-cyano-7-deazaguanine (preQ0) to 7-aminomethyl-7-deazaguanine (preQ1). This chain is NADPH-dependent 7-cyano-7-deazaguanine reductase, found in Wolinella succinogenes (strain ATCC 29543 / DSM 1740 / CCUG 13145 / JCM 31913 / LMG 7466 / NCTC 11488 / FDC 602W) (Vibrio succinogenes).